Consider the following 448-residue polypeptide: MQGAKNNIYTVSRLNGEVRQILEGQLGKIWLNGEISNFSSPSSGHWYLTLKDHSSQIRCAMFKGRNQTVSFKPINGQQVLVKGAISVYEPRGDYQLLIESMLPAGDGLLAQQFDALKMKLAAEGLFAADTKRPLPKNIQRIGVITSPTGAAIRDVLHVLARRDPSIEVIIYPTQVQGETAAQSICQAINIANQRLEVDVLLLTRGGGSLEDLWCFNSEALAHTIYNSALPVVSAVGHEVDTTISDYVADIRAPTPSAGAELLSQDSDNKAQKLATALSRLQQSAKHYQLKQERRLSLLEHRLQRQDPKRTLQQFEQRFDEMQLRLESALSNRLHILSRRQQLLASRLEQQSPKHKLAIEGNRLSYLASRLQDALQDKLSQSEQRIQYAAHQLETVSPLATLSRGYSITTDIHNQVADSADKLTIGDSLQTRFRHGQVISTVTQIKLLE.

Belongs to the XseA family. As to quaternary structure, heterooligomer composed of large and small subunits.

The protein resides in the cytoplasm. The catalysed reaction is Exonucleolytic cleavage in either 5'- to 3'- or 3'- to 5'-direction to yield nucleoside 5'-phosphates.. Its function is as follows. Bidirectionally degrades single-stranded DNA into large acid-insoluble oligonucleotides, which are then degraded further into small acid-soluble oligonucleotides. The chain is Exodeoxyribonuclease 7 large subunit from Shewanella baltica (strain OS195).